Reading from the N-terminus, the 704-residue chain is Protein cueball (704 aa).

The N-terminal stretch at M1–A26 is a signal peptide. Residues T27–T594 lie on the Extracellular side of the membrane. LDL-receptor class B repeat units follow at residues G69–E119, R120–T166, R199–R242, and N243–Y288. Residues N152 and N219 are each glycosylated (N-linked (GlcNAc...) asparagine). EGF-like domains follow at residues T363–E397, D432–E478, and E514–E551. Cystine bridges form between C372-C385, C387-C396, C436-C446, C440-C465, C467-C477, C518-C528, C522-C539, and C541-C550. The N-linked (GlcNAc...) asparagine glycan is linked to N375. N450 carries N-linked (GlcNAc...) asparagine glycosylation. N532 carries N-linked (GlcNAc...) asparagine glycosylation. N592 carries an N-linked (GlcNAc...) asparagine glycan. A helical membrane pass occupies residues V595–V615. Topologically, residues V616 to K704 are cytoplasmic.

It belongs to the cueball family.

It is found in the cell membrane. Functionally, has a role in spermatogenesis and oogenesis. The sequence is that of Protein cueball from Anopheles gambiae (African malaria mosquito).